The sequence spans 920 residues: MLSSTAILKASGDVAINYQQYIYPIIINKLSTLNYTIKNKKYYSQYKYSIQFQNEFQKNLKIYNNSNNNNNNNNNNKINKNNNNNNNNISKFFIQNNNIDKKVLRHFYSSTKLNYAKQQQQLFKNNETFNETVGASLLPIINKLQENAALIGSEITLPQIIVVGSQSSGKSSVLENLVGRDFLPRGSGLVTRRPLVLQLYQTTTTSRNNVNENEDEDEDDNYYDNDNDDNSLEEWGEFGHTGTNRFNFQEIKEEIERETERIAGPNKDISSEPIVLKIYSPKVVPLTLVDLPGLTRVAIEDQPPDIEEKIKSMIIDYISNPNSIILAITPANQDIVTSDALKLAQQVDPLGKRTIGVLTKLDLMDKGTDAIDILLGNSIPLSLGFVGVVNRSQQDINNRKPIEQMLADEWKWFDQHPVYHRITNQLGTKYLAQKCNKILTKHIRDTFPSVKNQIRQLIKKYESDLEKYGEPIPLRSAEKSRLLLDILNEFSRKYRADLDGTNEELILNEFNGGARIRYIFSKAFQSTTAAAATTSTDNSGGGEPFGWLSDQQLKIALRNSGSTMFIPQKIFDSLIRKQLERVREPLIQTSEIILDELIRILTQADYSHVLSRFPILKERIVEVSNNALRKLVKECNQSISQMVDAEMSFINTNHPNYLYQLNNLLFSSSSSSFVVPQGAFQSTSSTSSSPTSSSSSLPLPQNSNPYNDALNPYNIDRSYPIDNQIKQQQQQQQQQQQQSYQQQQQQQQKQQSGFLSRIFGSSSSPPSPPSPPQPKQQQSHEIQIQQQQQQQQQQHLKKQNLIFDDKFKLEQYGLNDITEDEKKQIYLLRRLLLAYNDIAQFNLQQNTMKLVSLLLIDKSKDILQKELIDSLYDQSSVDQLLRENELVVAKRNECIYKLDLLKKAKKSLSQSENSDLLHLY.

A disordered region spans residues 65 to 84; it reads NSNNNNNNNNNNKINKNNNN. In terms of domain architecture, Dynamin-type G spans 154–448; that stretch reads EITLPQIIVV…LTKHIRDTFP (295 aa). Residues 164–171 are G1 motif; the sequence is GSQSSGKS. 164–172 contacts GTP; sequence GSQSSGKSS. The interval 190 to 192 is G2 motif; it reads VTR. Residues 204-241 are disordered; it reads TTSRNNVNENEDEDEDDNYYDNDNDDNSLEEWGEFGHT. Acidic residues predominate over residues 212-236; the sequence is ENEDEDEDDNYYDNDNDDNSLEEWG. Residues 290–293 form a G3 motif region; that stretch reads DLPG. The interval 359 to 362 is G4 motif; sequence TKLD. GTP is bound by residues 359–365 and 390–393; these read TKLDLMD and NRSQ. Positions 389-392 are G5 motif; the sequence is VNRS. Positions 680–790 are disordered; the sequence is FQSTSSTSSS…EIQIQQQQQQ (111 aa). 2 stretches are compositionally biased toward low complexity: residues 681-705 and 724-751; these read QSTS…NSNP and QIKQ…QKQQ. Positions 724 to 751 form a coiled coil; the sequence is QIKQQQQQQQQQQQQSYQQQQQQQQKQQ. Over residues 765–774 the composition is skewed to pro residues; the sequence is PPSPPSPPQP. Over residues 775 to 790 the composition is skewed to low complexity; sequence KQQQSHEIQIQQQQQQ. Residues 825–916 enclose the GED domain; sequence IYLLRRLLLA…SLSQSENSDL (92 aa).

This sequence belongs to the TRAFAC class dynamin-like GTPase superfamily. Dynamin/Fzo/YdjA family.

The protein localises to the cytoplasm. Its function is as follows. Enzyme hydrolyzing GTP. This is Dynamin-B (dymB) from Dictyostelium discoideum (Social amoeba).